The chain runs to 625 residues: 1,4-alpha-glucan branching enzyme GlgB (625 aa).

The Nucleophile role is filled by D302. The active-site Proton donor is the E355.

It belongs to the glycosyl hydrolase 13 family. GlgB subfamily. In terms of assembly, monomer.

The catalysed reaction is Transfers a segment of a (1-&gt;4)-alpha-D-glucan chain to a primary hydroxy group in a similar glucan chain.. It functions in the pathway glycan biosynthesis; glycogen biosynthesis. Functionally, catalyzes the formation of the alpha-1,6-glucosidic linkages in glycogen by scission of a 1,4-alpha-linked oligosaccharide from growing alpha-1,4-glucan chains and the subsequent attachment of the oligosaccharide to the alpha-1,6 position. In Albidiferax ferrireducens (strain ATCC BAA-621 / DSM 15236 / T118) (Rhodoferax ferrireducens), this protein is 1,4-alpha-glucan branching enzyme GlgB.